The primary structure comprises 577 residues: Arginine--tRNA ligase (577 aa).

The short motif at 122-132 (PNVAKEMHVGH) is the 'HIGH' region element.

Belongs to the class-I aminoacyl-tRNA synthetase family. As to quaternary structure, monomer.

Its subcellular location is the cytoplasm. The enzyme catalyses tRNA(Arg) + L-arginine + ATP = L-arginyl-tRNA(Arg) + AMP + diphosphate. The protein is Arginine--tRNA ligase of Salmonella gallinarum (strain 287/91 / NCTC 13346).